The chain runs to 270 residues: UPF0354 protein BPUM_2629 (270 aa).

This sequence belongs to the UPF0354 family.

The polypeptide is UPF0354 protein BPUM_2629 (Bacillus pumilus (strain SAFR-032)).